We begin with the raw amino-acid sequence, 127 residues long: Small ribosomal subunit protein uS11 (127 aa).

This sequence belongs to the universal ribosomal protein uS11 family. In terms of assembly, part of the 30S ribosomal subunit. Interacts with proteins S7 and S18. Binds to IF-3.

Its function is as follows. Located on the platform of the 30S subunit, it bridges several disparate RNA helices of the 16S rRNA. Forms part of the Shine-Dalgarno cleft in the 70S ribosome. The polypeptide is Small ribosomal subunit protein uS11 (Flavobacterium johnsoniae (strain ATCC 17061 / DSM 2064 / JCM 8514 / BCRC 14874 / CCUG 350202 / NBRC 14942 / NCIMB 11054 / UW101) (Cytophaga johnsonae)).